Reading from the N-terminus, the 361-residue chain is Probable pectinesterase 49 (361 aa).

The N-terminal stretch at 1–22 is a signal peptide; that stretch reads MGYISLALVALLVFFASPVVLA. N-linked (GlcNAc...) asparagine glycosylation occurs at Asn128. Gln174 contributes to the substrate binding site. Asp197 serves as the catalytic Proton donor. The Nucleophile role is filled by Asp218. Positions 275 and 277 each coordinate substrate.

It belongs to the pectinesterase family. As to expression, expressed in flower buds.

The protein localises to the secreted. It is found in the cell wall. The catalysed reaction is [(1-&gt;4)-alpha-D-galacturonosyl methyl ester](n) + n H2O = [(1-&gt;4)-alpha-D-galacturonosyl](n) + n methanol + n H(+). The protein operates within glycan metabolism; pectin degradation; 2-dehydro-3-deoxy-D-gluconate from pectin: step 1/5. Acts in the modification of cell walls via demethylesterification of cell wall pectin. The protein is Probable pectinesterase 49 (PME49) of Arabidopsis thaliana (Mouse-ear cress).